The chain runs to 114 residues: Iron-sulfur cluster insertion protein ErpA (114 aa).

Residues cysteine 42, cysteine 106, and cysteine 108 each contribute to the iron-sulfur cluster site.

This sequence belongs to the HesB/IscA family. As to quaternary structure, homodimer. It depends on iron-sulfur cluster as a cofactor.

Required for insertion of 4Fe-4S clusters for at least IspG. The sequence is that of Iron-sulfur cluster insertion protein ErpA from Yersinia enterocolitica serotype O:8 / biotype 1B (strain NCTC 13174 / 8081).